The following is a 993-amino-acid chain: Desmoglein-3 (993 aa).

The N-terminal stretch at 1 to 23 (MTWLLFRTSGALAILMVLILVHG) is a signal peptide. A propeptide spanning residues 24 to 48 (ELRIETKGQHGEDETAIQGRRRYKR) is cleaved from the precursor. Cadherin domains follow at residues 48–156 (REWV…APVF), 157–266 (SQSI…FPMF), 267–386 (KESQ…HPAS), and 383–494 (HPAS…CPTV). Topologically, residues 49-617 (EWVKFAKPCR…GKRPSGRLGS (569 aa)) are extracellular. Residues N109 and N179 are each glycosylated (N-linked (GlcNAc...) asparagine). 2 N-linked (GlcNAc...) asparagine glycosylation sites follow: N458 and N544. The helical transmembrane segment at 618–638 (AAIGLLLLGLLLLLLAPLLLL) threads the bilayer. The Cytoplasmic segment spans residues 639–993 (TCDYGVGPIG…CTEDPCSRLI (355 aa)). Positions 641–713 (DYGVGPIGGV…NTYAGGTVVE (73 aa)) are required for interaction with CTNND1 and localization at cell-cell junctions. Desmoglein repeat repeat units follow at residues 903-929 (LSASSSVLQSATSIPNPVQHGSYMVTE) and 930-960 (TYSASGSLVQPTTTVLEPLLTQNVTVTERVI).

Homodimer. Part of a complex that contains DSG3, PKP1, YAP1 and YWHAG; the complex is required for localization of DSG3 and YAP1 to the cell membrane in keratinocytes. Interacts with PKP2. Interacts with CTNND1; the interaction facilitates DSG3 localization and retention at cell-cell junctions. Interacts with CDH1; the interaction is required for CDH1 localization to developing adherens junctions. Interacts with RAC1; the interaction is required for DSG3 translocation to cell-cell junctions, organization of cortical F-actin bundles and actin anchoring at cell-cell junctions. Interacts with DSC3; the interaction may limit the interaction of DSC3 with p38MAPK family members and therefore repress p38MAPK signaling activation.

Its subcellular location is the cell membrane. It localises to the cell junction. The protein resides in the desmosome. It is found in the cytoplasm. The protein localises to the tight junction. A component of desmosome cell-cell junctions which are required for positive regulation of cellular adhesion. Required for adherens and desmosome junction assembly in response to mechanical force in keratinocytes. Required for desmosome-mediated cell-cell adhesion of cells surrounding the telogen hair club and the basal layer of the outer root sheath epithelium, consequently is essential for the anchoring of telogen hairs in the hair follicle. Required for the maintenance of the epithelial barrier via promoting desmosome-mediated intercellular attachment of suprabasal epithelium to basal cells. May play a role in the protein stability of the desmosome plaque components DSP, JUP, PKP1, PKP2 and PKP3. Required for YAP1 localization at the plasma membrane in keratinocytes in response to mechanical strain, via the formation of an interaction complex composed of DSG3, PKP1 and YWHAG. May also be involved in the positive regulation of YAP1 target gene transcription and as a result cell proliferation. Positively regulates cellular contractility and cell junction formation via organization of cortical F-actin bundles and anchoring of actin to tight junctions, in conjunction with RAC1. The cytoplasmic pool of DSG3 is required for the localization of CDH1 and CTNNB1 at developing adherens junctions, potentially via modulation of SRC activity. Inhibits keratinocyte migration via suppression of p38MAPK signaling, may therefore play a role in moderating wound healing. This chain is Desmoglein-3 (DSG3), found in Canis lupus familiaris (Dog).